A 278-amino-acid polypeptide reads, in one-letter code: Extracellular metalloprotease GLRG_06511 (278 aa).

A signal peptide spans 1–19 (MQFKSLLVSALAAASTALA). N51 carries an N-linked (GlcNAc...) asparagine glycan. Zn(2+) is bound at residue H190. Residue E191 is part of the active site. Residue H194 coordinates Zn(2+). A disulfide bond links C227 and C254.

Belongs to the peptidase M43B family.

Its subcellular location is the secreted. Secreted metalloproteinase that allows assimilation of proteinaceous substrates. The protein is Extracellular metalloprotease GLRG_06511 of Colletotrichum graminicola (strain M1.001 / M2 / FGSC 10212) (Maize anthracnose fungus).